The following is a 288-amino-acid chain: 4-hydroxybenzoate octaprenyltransferase (288 aa).

8 consecutive transmembrane segments (helical) span residues 23 to 43, 46 to 66, 98 to 118, 141 to 161, 163 to 183, 213 to 233, 234 to 254, and 268 to 288; these read IGSL…GRGI, AKIL…GCVV, ILFV…NSMT, LPQV…FAAV, ESLP…TVAY, LIIG…GWLM, NLGG…THQQ, and AFLN…ISYW.

It belongs to the UbiA prenyltransferase family. It depends on Mg(2+) as a cofactor.

It localises to the cell inner membrane. The enzyme catalyses all-trans-octaprenyl diphosphate + 4-hydroxybenzoate = 4-hydroxy-3-(all-trans-octaprenyl)benzoate + diphosphate. It functions in the pathway cofactor biosynthesis; ubiquinone biosynthesis. Functionally, catalyzes the prenylation of para-hydroxybenzoate (PHB) with an all-trans polyprenyl group. Mediates the second step in the final reaction sequence of ubiquinone-8 (UQ-8) biosynthesis, which is the condensation of the polyisoprenoid side chain with PHB, generating the first membrane-bound Q intermediate 3-octaprenyl-4-hydroxybenzoate. This Yersinia pseudotuberculosis serotype IB (strain PB1/+) protein is 4-hydroxybenzoate octaprenyltransferase.